The chain runs to 1249 residues: Myosin-1 (1249 aa).

The segment at 1–40 (MGHSRRPAGGEKKSRFGRSKAAADVGDGRQAGGKPQVRKA) is disordered. Positions 50 to 729 (IGVSDLTLLS…TLFALEAMRD (680 aa)) constitute a Myosin motor domain. 143 to 150 (GESGAGKT) contributes to the ATP binding site. A Phosphoserine modification is found at S371. The actin-binding stretch occupies residues 418 to 500 (SIGILDIYGF…PGVFAALNDA (83 aa)). IQ domains follow at residues 733 to 753 (HNMA…RTEC) and 754 to 779 (AIRI…QGHT). Residues 787–979 (RRRMSILGSR…PGEPPNSVSK (193 aa)) form the TH1 domain. Disordered stretches follow at residues 959–1081 (DSYK…KAKA) and 1127–1249 (EAYL…DDDW). 2 stretches are compositionally biased toward low complexity: residues 1026–1035 (PQTAAAQPTP) and 1043–1061 (PVAA…ASAR). Over residues 1062–1073 (APPPPPPAPPAA) the composition is skewed to pro residues. An SH3 domain is found at 1074–1135 (AGPKKAKALY…PEAYLEEQVA (62 aa)). The segment covering 1137-1149 (TPKPAPPPPPPVA) has biased composition (pro residues). A compositionally biased stretch (low complexity) spans 1150–1170 (PRASPAPVNGSAAVAAAKAKA). Positions 1199-1221 (VSMNSQGDSSGASGRGTPSSVSN) are enriched in polar residues. Residues 1222 to 1235 (ASLAGGLAEALRAR) show a composition bias toward low complexity.

It belongs to the TRAFAC class myosin-kinesin ATPase superfamily. Myosin family. In terms of assembly, interacts (via IQ domains) with camA. Post-translationally, phosphorylation of the TEDS site (Ser-371) is required for the polarization of the actin cytoskeleton. Phosphorylation probably activates the myosin-I ATPase activity.

It localises to the cytoplasm. It is found in the cytoskeleton. The protein resides in the actin patch. Type-I myosin implicated in the organization of the actin cytoskeleton. Required for proper actin cytoskeleton polarization. At the cell cortex, assembles in patch-like structures together with proteins from the actin-polymerizing machinery and promotes actin assembly. Functions as actin nucleation-promoting factor (NPF) for the Arp2/3 complex. Plays an important role in polarized growth, spore germination, hyphal morphogenesis, and septal wall formation. The chain is Myosin-1 (myoA) from Emericella nidulans (strain FGSC A4 / ATCC 38163 / CBS 112.46 / NRRL 194 / M139) (Aspergillus nidulans).